Consider the following 279-residue polypeptide: DegV domain-containing protein lmo1863 (279 aa).

A DegV domain is found at 4 to 278; sequence IKIITDSTAG…TGAFAFMYYT (275 aa). Residues S62 and S94 each coordinate hexadecanoate.

Functionally, may bind long-chain fatty acids, such as palmitate, and may play a role in lipid transport or fatty acid metabolism. The protein is DegV domain-containing protein lmo1863 of Listeria monocytogenes serovar 1/2a (strain ATCC BAA-679 / EGD-e).